We begin with the raw amino-acid sequence, 298 residues long: Bifunctional methyltransferase/endonuclease (298 aa).

The tract at residues 1 to 79 (MQSIDLYSYL…SLGIDEKIRR (79 aa)) is probable methylated-DNA--protein-cysteine methyltransferase. The active site involves cysteine 56. The tract at residues 80–298 (LRNDGIEINN…TVALRRNNII (219 aa)) is endonuclease V. Residues aspartate 137 and aspartate 197 each coordinate Mg(2+).

This sequence in the N-terminal section; belongs to the MGMT family. The protein in the C-terminal section; belongs to the endonuclease V family. Requires Mg(2+) as cofactor.

The protein localises to the cytoplasm. It carries out the reaction Endonucleolytic cleavage at apurinic or apyrimidinic sites to products with a 5'-phosphate.. Functionally, DNA repair enzyme involved in the repair of deaminated bases. Selectively cleaves double-stranded DNA at the second phosphodiester bond 3' to a deoxyinosine leaving behind the intact lesion on the nicked DNA. The sequence is that of Bifunctional methyltransferase/endonuclease from Picrophilus torridus (strain ATCC 700027 / DSM 9790 / JCM 10055 / NBRC 100828 / KAW 2/3).